The chain runs to 103 residues: Phosphoribosyl-ATP pyrophosphatase (103 aa).

The interval 79–103 (SVQAELERREGKLSTTRDRKEIDEL) is disordered. The span at 83–103 (ELERREGKLSTTRDRKEIDEL) shows a compositional bias: basic and acidic residues.

This sequence belongs to the PRA-PH family.

It is found in the cytoplasm. It catalyses the reaction 1-(5-phospho-beta-D-ribosyl)-ATP + H2O = 1-(5-phospho-beta-D-ribosyl)-5'-AMP + diphosphate + H(+). The protein operates within amino-acid biosynthesis; L-histidine biosynthesis; L-histidine from 5-phospho-alpha-D-ribose 1-diphosphate: step 2/9. This Listeria welshimeri serovar 6b (strain ATCC 35897 / DSM 20650 / CCUG 15529 / CIP 8149 / NCTC 11857 / SLCC 5334 / V8) protein is Phosphoribosyl-ATP pyrophosphatase.